The chain runs to 122 residues: Histone H2B subacrosomal variant (122 aa).

A compositionally biased stretch (basic residues) spans 1 to 25 (MARNVTKRNKRCRGHQKAIYKKKSH). A disordered region spans residues 1 to 30 (MARNVTKRNKRCRGHQKAIYKKKSHSSSES).

This sequence belongs to the histone H2B family. As to expression, testis-specific. Restricted to the spermatid population of seminiferous epithelium. Not present in Sertoli cells, spermatogonia, spermatocytes or cells of the interstitial tissue (at protein level).

The protein resides in the cytoplasm. Its function is as follows. May act as an acrosome-nuclear docking protein in sperm. In Bos taurus (Bovine), this protein is Histone H2B subacrosomal variant (SUBH2BV).